The sequence spans 132 residues: MRHGHGLRKLNRTSSHRLAMLQNMMNSLIEHEVIKTTVPKAKELRRVIEPMITLAKKPTVANKRLAFDRLRDRDSVVKLFGELGPRFAARPGGYTRILKMGFRVGDNAPMALVELVDRPEIKEEAAEQGAAE.

Belongs to the bacterial ribosomal protein bL17 family. As to quaternary structure, part of the 50S ribosomal subunit. Contacts protein L32.

The chain is Large ribosomal subunit protein bL17 from Variovorax paradoxus (strain S110).